A 473-amino-acid chain; its full sequence is Cysteine--tRNA ligase (473 aa).

Cys-28 contributes to the Zn(2+) binding site. Positions 30–40 (VTVYDLCHLGH) match the 'HIGH' region motif. Zn(2+) is bound by residues Cys-213, His-238, and Glu-242. The short motif at 270 to 274 (KMSKS) is the 'KMSKS' region element. Lys-273 is a binding site for ATP.

It belongs to the class-I aminoacyl-tRNA synthetase family. Monomer. The cofactor is Zn(2+).

It is found in the cytoplasm. The catalysed reaction is tRNA(Cys) + L-cysteine + ATP = L-cysteinyl-tRNA(Cys) + AMP + diphosphate. This is Cysteine--tRNA ligase from Blochmanniella pennsylvanica (strain BPEN).